The primary structure comprises 374 residues: Peptide chain release factor 2 (374 aa).

Gln-252 is subject to N5-methylglutamine.

It belongs to the prokaryotic/mitochondrial release factor family. Methylated by PrmC. Methylation increases the termination efficiency of RF2.

Its subcellular location is the cytoplasm. In terms of biological role, peptide chain release factor 2 directs the termination of translation in response to the peptide chain termination codons UGA and UAA. The chain is Peptide chain release factor 2 from Stenotrophomonas maltophilia (strain R551-3).